The sequence spans 230 residues: MADS-box transcription factor 50 (230 aa).

An MADS-box domain is found at 1-61; it reads MVRGKTQMKR…GKLYEFASAS (61 aa). The K-box domain maps to 86–176; the sequence is IEQVKADADG…REKCKNQPPL (91 aa). The disordered stretch occupies residues 209–230; it reads GLPGRSRSSGGAAEDSQAMPHS.

Expressed in mature leaves and at low levels in roots and young panicles.

Its subcellular location is the nucleus. Functionally, probable transcription factor active in flowering time control. May control internode elongation and promote floral transition phase. May act upstream of the floral regulators MADS1, MADS14, MADS15 and MADS18 in the floral induction pathway. This chain is MADS-box transcription factor 50 (MADS50), found in Oryza sativa subsp. japonica (Rice).